A 210-amino-acid chain; its full sequence is Claudin-4 (210 aa).

The Cytoplasmic segment spans residues 1 to 7 (MASMGLQ). The segment at 1-103 (MASMGLQVLG…GMLLSVVGGK (103 aa)) is interaction with EPHA2. The chain crosses the membrane as a helical span at residues 8–28 (VLGISLAVLGWLGIILSCALP). The Extracellular portion of the chain corresponds to 29–81 (MWRVTAFIGSNIVTAQTSWEGLWMNCVVQSTGQMQCKMYDSMLALPQDLQAAR). Cys-54 and Cys-64 form a disulfide bridge. The helical transmembrane segment at 82 to 102 (ALMVISIIVGALGMLLSVVGG) threads the bilayer. The Cytoplasmic portion of the chain corresponds to 103 to 116 (KCTNCMEDETVKAK). A helical membrane pass occupies residues 117–137 (IMITAGAVFIVASMLIMVPVS). Topologically, residues 138 to 160 (WTAHNVIRDFYNPMVASGQKREM) are extracellular. Residues 161 to 181 (GASLYVGWAASGLLLLGGGLL) traverse the membrane as a helical segment. The Cytoplasmic segment spans residues 182–210 (CCSCPPRSNDKPYSAKYSAARSVPASNYV). Residue Tyr-209 is modified to Phosphotyrosine; by EPHA2. Residues 209–210 (YV) are interactions with TJP1, TJP2 and TJP3.

This sequence belongs to the claudin family. Can form heteropolymeric strands with other claudins. Interacts with CLDN8. Interacts with CLDN1. Directly interacts with TJP1/ZO-1, TJP2/ZO-2 and TJP3/ZO-3. Interacts with EPHA2; phosphorylates CLDN4 and may regulate tight junctions. Phosphorylated. Phosphorylation by EPHA2 is stimulated by EFNA1 and alters interaction with TJP1. Expressed primarily in lung and kidney. Present in both cortical and medullar collecting ducts (at protein level).

The protein resides in the cell junction. The protein localises to the tight junction. It localises to the cell membrane. The catalysed reaction is chloride(in) = chloride(out). The enzyme catalyses bromide(in) = bromide(out). It catalyses the reaction iodide(out) = iodide(in). It carries out the reaction fluoride(in) = fluoride(out). In terms of biological role, can associate with other claudins to regulate tight junction structural and functional strand dynamics. May coassemble with CLDN8 into tight junction strands containing anion-selective channels that convey paracellular chloride permeability in renal collecting ducts. May integrate into CLDN3 strands to modulate localized tight junction barrier properties. May disrupt strand assembly of channel-forming CLDN2 and CLDN15 and inhibit cation conductance. Cannot form tight junction strands on its own. The chain is Claudin-4 from Mus musculus (Mouse).